Consider the following 212-residue polypeptide: ER lumen protein-retaining receptor 1 (212 aa).

Residues 1–4 (MNLF) are Lumenal-facing. A helical membrane pass occupies residues 5 to 24 (RFLGDLSHLLAIILLLLKIW). Residues 25-32 (KSRSCAGI) lie on the Cytoplasmic side of the membrane. A helical transmembrane segment spans residues 33–52 (SGKSQVLFAVVFTARYLDLF). Residues 47–48 (RY) are interaction with the K-D-E-L motif on target proteins. The Lumenal portion of the chain corresponds to 53–58 (TNYISL). The chain crosses the membrane as a helical span at residues 59–79 (YNTCMKVVYIACSFTTVWLIY). Over 80–92 (SKFKATYDGNHDT) the chain is Cytoplasmic. A helical membrane pass occupies residues 93 to 110 (FRVEFLVVPTAILAFLVN). The Lumenal portion of the chain corresponds to 111-116 (HDFTPL). The chain crosses the membrane as a helical span at residues 117-135 (EILWTFSIYLESVAILPQL). The Cytoplasmic portion of the chain corresponds to 136-149 (FMVSKTGEAETITS). Residues 150 to 168 (HYLFALGVYRTLYLFNWIW) traverse the membrane as a helical segment. The interval 159–169 (RTLYLFNWIWR) is interaction with the K-D-E-L motif on target proteins. The Lumenal portion of the chain corresponds to 169–178 (RYHFEGFFDL). A helical transmembrane segment spans residues 179-199 (IAIVAGLVQTVLYCDFFYLYI). Over 200 to 212 (TKVLKGKKLSLPA) the chain is Cytoplasmic. An important for recycling of cargo proteins with the sequence motif K-D-E-L from the Golgi to the endoplasmic reticulum region spans residues 204–207 (KGKK). A Phosphoserine; by PKA modification is found at Ser-209.

Belongs to the ERD2 family. As to quaternary structure, upon ligand binding the receptor oligomerizes and interacts with components of the transport machinery such as ARFGAP1 and ARF1. Post-translationally, phosphorylation by PKA at Ser-209 is required for endoplasmic reticulum retention function.

The protein localises to the golgi apparatus membrane. It is found in the cytoplasmic vesicle. The protein resides in the COPI-coated vesicle membrane. It localises to the endoplasmic reticulum membrane. Its subcellular location is the endoplasmic reticulum-Golgi intermediate compartment membrane. Receptor for the C-terminal sequence motif K-D-E-L that is present on endoplasmic reticulum resident proteins and that mediates their recycling from the Golgi back to the endoplasmic reticulum. The sequence is that of ER lumen protein-retaining receptor 1 (KDELR1) from Homo sapiens (Human).